The primary structure comprises 1009 residues: Chitin synthase 2 (1009 aa).

Polar residues-rich tracts occupy residues 1-12 and 34-62; these read MSYNNPNNSNSH and EFLNQRSNTPLTQGTYNYHNTSTNSLNFQ. 2 disordered regions span residues 1-62 and 175-234; these read MSYN…LNFQ and DESQ…EVRS. Over residues 192–202 the composition is skewed to acidic residues; sequence EGEEEEEEGET. 7 helical membrane-spanning segments follow: residues 647–667, 682–702, 722–742, 757–777, 804–823, 930–950, and 967–987; these read WLNGSFFAAIYSLVHFYKVWT, FFYQLINLIVSWFSIGSYFLV, ILSVIFLWLYLASIVTTFVLS, IVIFFAILMAYMIFAAIFMAV, LVVATSSTYALYFLASFLYF, VLVWMFTNFVVIALVLETGGF, and AAVFLTVILWTVAFMALFRFI.

It belongs to the chitin synthase family.

Its subcellular location is the cell membrane. It carries out the reaction [(1-&gt;4)-N-acetyl-beta-D-glucosaminyl](n) + UDP-N-acetyl-alpha-D-glucosamine = [(1-&gt;4)-N-acetyl-beta-D-glucosaminyl](n+1) + UDP + H(+). Its function is as follows. Polymerizes chitin, a structural polymer of the cell wall and septum, by transferring the sugar moiety of UDP-GlcNAc to the non-reducing end of the growing chitin polymer. This Candida albicans (Yeast) protein is Chitin synthase 2 (CHS2).